A 272-amino-acid polypeptide reads, in one-letter code: Cytochrome c oxidase subunit 3 (272 aa).

The next 7 helical transmembrane spans lie at 23 to 43, 45 to 65, 91 to 111, 137 to 157, 169 to 189, 210 to 230, and 249 to 269; these read PWPF…VMYM, AYVN…LVMF, FGVI…FWAF, WEIP…VTWC, SVLS…FQAY, ATGF…VCLI, and AWYW…IYWW.

The protein belongs to the cytochrome c oxidase subunit 3 family. In terms of assembly, component of the cytochrome c oxidase (complex IV, CIV), a multisubunit enzyme composed of a catalytic core of 3 subunits and several supernumerary subunits. The complex exists as a monomer or a dimer and forms supercomplexes (SCs) in the inner mitochondrial membrane with ubiquinol-cytochrome c oxidoreductase (cytochrome b-c1 complex, complex III, CIII).

It is found in the mitochondrion inner membrane. The catalysed reaction is 4 Fe(II)-[cytochrome c] + O2 + 8 H(+)(in) = 4 Fe(III)-[cytochrome c] + 2 H2O + 4 H(+)(out). Component of the cytochrome c oxidase, the last enzyme in the mitochondrial electron transport chain which drives oxidative phosphorylation. The respiratory chain contains 3 multisubunit complexes succinate dehydrogenase (complex II, CII), ubiquinol-cytochrome c oxidoreductase (cytochrome b-c1 complex, complex III, CIII) and cytochrome c oxidase (complex IV, CIV), that cooperate to transfer electrons derived from NADH and succinate to molecular oxygen, creating an electrochemical gradient over the inner membrane that drives transmembrane transport and the ATP synthase. Cytochrome c oxidase is the component of the respiratory chain that catalyzes the reduction of oxygen to water. Electrons originating from reduced cytochrome c in the intermembrane space (IMS) are transferred via the dinuclear copper A center (CU(A)) of subunit 2 and heme A of subunit 1 to the active site in subunit 1, a binuclear center (BNC) formed by heme A3 and copper B (CU(B)). The BNC reduces molecular oxygen to 2 water molecules using 4 electrons from cytochrome c in the IMS and 4 protons from the mitochondrial matrix. The polypeptide is Cytochrome c oxidase subunit 3 (COX3) (Chondrus crispus (Carrageen Irish moss)).